Here is a 426-residue protein sequence, read N- to C-terminus: Divalent metal cation transporter MntH (426 aa).

Helical transmembrane passes span 31–51, 58–78, 134–156, 169–189, 208–228, 256–276, 298–318, 337–357, 363–383, and 402–422; these read WYLL…GNVA, AQFG…AGLV, ILFR…LLLM, VITG…FVAT, SVLL…VYLH, VILA…VAAI, LGAT…LASA, IPML…LALG, ALVL…LPLV, and TVLG…LIYL.

Belongs to the NRAMP family.

It localises to the cell membrane. Its function is as follows. H(+)-stimulated, divalent metal cation uptake system. This chain is Divalent metal cation transporter MntH, found in Mycobacterium leprae (strain TN).